Here is a 661-residue protein sequence, read N- to C-terminus: Meiotic coiled-coil protein 1 (661 aa).

5 coiled-coil regions span residues 38-78 (LDAL…IIEE), 100-121 (RAIY…ERLS), 143-184 (DIKL…LSIK), 304-320 (ELIQ…EVDL), and 360-387 (LKRL…DNEK). 3 disordered regions span residues 410–446 (QNQE…LRNI), 467–562 (LIDR…TPAS), and 573–592 (LSRT…TPTQ). Residues 414–430 (NISSNDNSKSSPESSPP) show a composition bias toward low complexity. Residues 436 to 445 (GKIENKKLRN) show a composition bias toward basic and acidic residues. Polar residues-rich tracts occupy residues 472–481 (VNQSPDTRSV), 548–562 (HNSV…TPAS), and 582–592 (FTNSLDDTPTQ).

In Schizosaccharomyces pombe (strain 972 / ATCC 24843) (Fission yeast), this protein is Meiotic coiled-coil protein 1 (mcp1).